The primary structure comprises 203 residues: Recombination protein RecR (203 aa).

The C4-type zinc finger occupies 57 to 72 (CQRCRTLAETPLCSIC). The Toprim domain maps to 80 to 175 (GLLCVVESPA…RLSRLAYGVP (96 aa)).

This sequence belongs to the RecR family.

In terms of biological role, may play a role in DNA repair. It seems to be involved in an RecBC-independent recombinational process of DNA repair. It may act with RecF and RecO. The protein is Recombination protein RecR of Chromohalobacter salexigens (strain ATCC BAA-138 / DSM 3043 / CIP 106854 / NCIMB 13768 / 1H11).